We begin with the raw amino-acid sequence, 721 residues long: BBSome complex member bbs-7 (721 aa).

As to quaternary structure, part of BBSome complex, that contains at least bbs-1, bbs-2, bbs-4, bbs-5, osm-12, bbs-8/ttc-8 and bbs-9. Interacts with bbs-1. Expressed in ciliated cells including amphid and both inner and outer labial neurons of the head and in both phasmid neurons PHA and PHB in the tail at larval stages L1 and L2.

Its subcellular location is the cell projection. The protein resides in the cilium. It localises to the cytoplasm. The protein localises to the cytoskeleton. It is found in the cilium basal body. Its subcellular location is the cilium axoneme. Functionally, component of the BBSome complex. The BBSome complex is thought to function as a coat complex required for sorting of specific membrane proteins to the primary cilia. The BBSome complex is required for ciliogenesis but is dispensable for centriolar satellite function. Required for proper BBSome complex assembly and its ciliary localization. Required for cilia biogenesis and both the assembly and movement of intraflagellar transport proteins along the ciliary axoneme. Plays a role in the removal of degraded mechanosensory receptors within the cilia. Plays a role in guanylyl cyclase localization in the ring-like structures at the base of the finger compartment in AFD sensory neurons. In ciliated sensory neurons, required for the sensation of nitric oxide and avoidance of NO-producing organisms like P.aeruginosa. The sequence is that of BBSome complex member bbs-7 from Caenorhabditis elegans.